Reading from the N-terminus, the 258-residue chain is Flagellar L-ring protein (258 aa).

An N-terminal signal peptide occupies residues 1-15 (MKRIVCLALFLSMTG). Residue cysteine 16 is the site of N-palmitoyl cysteine attachment. A lipid anchor (S-diacylglycerol cysteine) is attached at cysteine 16.

Belongs to the FlgH family. In terms of assembly, the basal body constitutes a major portion of the flagellar organelle and consists of four rings (L,P,S, and M) mounted on a central rod.

The protein localises to the cell outer membrane. The protein resides in the bacterial flagellum basal body. Functionally, assembles around the rod to form the L-ring and probably protects the motor/basal body from shearing forces during rotation. The polypeptide is Flagellar L-ring protein (Vibrio atlanticus (strain LGP32) (Vibrio splendidus (strain Mel32))).